The chain runs to 220 residues: Ribonuclease P protein subunit p29 (220 aa).

Phosphoserine is present on S10.

It belongs to the eukaryotic/archaeal RNase P protein component 1 family. Component of nuclear RNase P and RNase MRP ribonucleoproteins. RNase P consists of a catalytic RNA moiety and 10 different protein chains; POP1, POP4, POP5, POP7, RPP14, RPP21, RPP25, RPP30, RPP38 and RPP40. Within the RNase P complex, POP1, POP7 and RPP25 form the 'finger' subcomplex, POP5, RPP14, RPP40 and homodimeric RPP30 form the 'palm' subcomplex, and RPP21, POP4 and RPP38 form the 'wrist' subcomplex. All subunits of the RNase P complex interact with the catalytic RNA. Several subunits of RNase P are also part of the RNase MRP complex. RNase MRP consists of a catalytic RNA moiety and about 8 protein subunits; POP1, POP7, RPP25, RPP30, RPP38, RPP40 and possibly also POP4 and POP5.

It localises to the nucleus. It is found in the nucleolus. Component of ribonuclease P, a ribonucleoprotein complex that generates mature tRNA molecules by cleaving their 5'-ends. This Homo sapiens (Human) protein is Ribonuclease P protein subunit p29 (POP4).